The chain runs to 358 residues: Alternative oxidase, mitochondrial (358 aa).

Residues 152-172 (LIRYVFLESVAGVPGMVAGML) traverse the membrane as a helical segment. Fe cation-binding residues include E159, E198, and H201. A helical transmembrane segment spans residues 218–238 (MILGAQGVFFNSFFLCYLFSP). 3 residues coordinate Fe cation: E249, E306, and H309.

Belongs to the alternative oxidase family. It depends on Fe cation as a cofactor.

The protein localises to the mitochondrion inner membrane. Functionally, catalyzes cyanide-resistant oxygen consumption. May increase respiration when the cytochrome respiratory pathway is restricted, or in response to low temperatures. In Monilinia fructicola (Brown rot fungus), this protein is Alternative oxidase, mitochondrial (AOX1).